We begin with the raw amino-acid sequence, 394 residues long: Elongation factor Tu 1 (394 aa).

The tr-type G domain occupies 10-204 (KPHVNVGTIG…YLDSYIPEPE (195 aa)). Positions 19–26 (GHVDHGKT) are G1. A GTP-binding site is contributed by 19-26 (GHVDHGKT). Thr26 is a Mg(2+) binding site. The interval 60–64 (GITIN) is G2. The segment at 81–84 (DCPG) is G3. GTP-binding positions include 81–85 (DCPGH) and 136–139 (NKCD). The interval 136 to 139 (NKCD) is G4. Residues 174–176 (SAL) are G5.

Belongs to the TRAFAC class translation factor GTPase superfamily. Classic translation factor GTPase family. EF-Tu/EF-1A subfamily. As to quaternary structure, monomer.

It localises to the cytoplasm. The enzyme catalyses GTP + H2O = GDP + phosphate + H(+). In terms of biological role, GTP hydrolase that promotes the GTP-dependent binding of aminoacyl-tRNA to the A-site of ribosomes during protein biosynthesis. The polypeptide is Elongation factor Tu 1 (Serratia proteamaculans (strain 568)).